The primary structure comprises 163 residues: Phosphopantetheine adenylyltransferase (163 aa).

A substrate-binding site is contributed by T9. Residues T9–F10 and H17 each bind ATP. Positions 41, 73, and 87 each coordinate substrate. ATP contacts are provided by residues G88–R90, E98, and Y123–T129.

The protein belongs to the bacterial CoaD family. In terms of assembly, homohexamer. The cofactor is Mg(2+).

The protein resides in the cytoplasm. The catalysed reaction is (R)-4'-phosphopantetheine + ATP + H(+) = 3'-dephospho-CoA + diphosphate. The protein operates within cofactor biosynthesis; coenzyme A biosynthesis; CoA from (R)-pantothenate: step 4/5. In terms of biological role, reversibly transfers an adenylyl group from ATP to 4'-phosphopantetheine, yielding dephospho-CoA (dPCoA) and pyrophosphate. The protein is Phosphopantetheine adenylyltransferase of Herminiimonas arsenicoxydans.